The chain runs to 150 residues: Large ribosomal subunit protein uL15 (150 aa).

The interval 1-51 (MKLHTLRPAKGSVKTSKRIGRGTGSGRGGTSTKGHKGAKSRSGYSSKIGFE) is disordered. The span at 21 to 31 (RGTGSGRGGTS) shows a compositional bias: gly residues.

This sequence belongs to the universal ribosomal protein uL15 family. Part of the 50S ribosomal subunit.

Binds to the 23S rRNA. This chain is Large ribosomal subunit protein uL15, found in Cytophaga hutchinsonii (strain ATCC 33406 / DSM 1761 / CIP 103989 / NBRC 15051 / NCIMB 9469 / D465).